Consider the following 439-residue polypeptide: Serine hydroxymethyltransferase (439 aa).

127-129 (AHV) provides a ligand contact to (6S)-5,6,7,8-tetrahydrofolate. Lysine 233 carries the N6-(pyridoxal phosphate)lysine modification.

It belongs to the SHMT family. Homodimer. Pyridoxal 5'-phosphate is required as a cofactor.

It is found in the cytoplasm. It functions in the pathway amino-acid biosynthesis; glycine biosynthesis; glycine from L-serine: step 1/1. Functionally, catalyzes the reversible interconversion of serine and glycine with a modified folate serving as the one-carbon carrier. Also exhibits a pteridine-independent aldolase activity toward beta-hydroxyamino acids, producing glycine and aldehydes, via a retro-aldol mechanism. This is Serine hydroxymethyltransferase from Aeropyrum pernix (strain ATCC 700893 / DSM 11879 / JCM 9820 / NBRC 100138 / K1).